The primary structure comprises 754 residues: MSSNQIYSAKYSGVDVYEFIHPTGSIMKRKADNWVNATHILKAAKFPKAKRTRILEKEVITDTHEKVQGGFGKYQGTWIPLELASKLAEKFEVLDELKPLFDFTQQEGSASPPQAPKHHHASRSDSTRKKATKSASVPSGKVSEKASSQQQQPVSQQQQQQPGSAPKRRGRPPRNKATVTLQRSQSEMVFPKPSIPSSSIQSTKLPSLQPQFGRSATSLSPIMDVKSPLDQASPQFKELDIEDGLSSDVEPNSIMGTKHEDNTHLMNTKDEPVSSSSSLPSSPSEFSQSVAFGSRSNMQTPLQLNGTTSMNMILPKFSSSQNGPSDSNQRANEYLSKLVNYFISNDTQNESEIPMELLNPPLHCSPFIDTWIDPEHHTAFHWACAMGTLPIVEALLKAGSSIRSLNNVGETPLIRSSIFHNCYTKRTYPQIFEILKDTVFDLDAKSRNVIHRIVSRKSHTPSAVYYLDVVLSKIKDFTPQYRIDVLINQQDNDGNSPLHYAATNKDDQFYQLLLQNGALTTVQNNSGMTPNGIISGRYSMDEITKGQRLDDPYEFNKMYPSQAATRTNRIIPEVINMMKEMANSYQNAYQKRQNEVLQMERTVKSMKKTITSVEMKLLEALNLKETDNVDIVLNDRKEKIDELQRRIATDKRVLINRLEEGQVKLIRKFVDEETKNVEGKTTDGEESEDIEALLKELVLIQLKRKRKLNQIIDVITDNSKVYKYRKMISQGTDIDVSDVDECLDVIYQTLSKEG.

One can recognise an HTH APSES-type domain in the interval 6-112 (IYSAKYSGVD…FTQQEGSASP (107 aa)). The H-T-H motif DNA-binding region spans 37 to 58 (ATHILKAAKFPKAKRTRILEKE). Disordered regions lie at residues 105-215 (QQEG…FGRS) and 239-301 (LDIE…MQTP). A compositionally biased stretch (low complexity) spans 147-162 (SSQQQQPVSQQQQQQP). Composition is skewed to polar residues over residues 177 to 187 (ATVTLQRSQSE) and 203 to 215 (TKLP…FGRS). Over residues 257–272 (TKHEDNTHLMNTKDEP) the composition is skewed to basic and acidic residues. Over residues 273-289 (VSSSSSLPSSPSEFSQS) the composition is skewed to low complexity. The segment covering 290–301 (VAFGSRSNMQTP) has biased composition (polar residues). ANK repeat units follow at residues 375 to 404 (EHHT…SIRS) and 493 to 522 (DGNS…LTTV).

In terms of assembly, MBF contains SWI6 and MBP1.

It localises to the nucleus. Its function is as follows. Binds to MCB elements (Mlu I cell cycle box) found in the promoter of most DNA synthesis genes. Transcriptional activation by MBF has an important role in the transition from G1 to S phase. It may have a dual role in that it behaves as an activator of transcription at the G1-S boundary and as a repressor during other stages of the cell cycle. The polypeptide is Transcription factor MBP1 (MBP1) (Kluyveromyces lactis (strain ATCC 8585 / CBS 2359 / DSM 70799 / NBRC 1267 / NRRL Y-1140 / WM37) (Yeast)).